Consider the following 336-residue polypeptide: Glyceraldehyde-3-phosphate dehydrogenase (336 aa).

Residues 12–13 (RI), D34, and M79 contribute to the NAD(+) site. Residues 150–152 (SCT), T181, 210–211 (TG), and R233 each bind D-glyceraldehyde 3-phosphate. The active-site Nucleophile is C151. N316 serves as a coordination point for NAD(+).

This sequence belongs to the glyceraldehyde-3-phosphate dehydrogenase family. Homotetramer.

The protein localises to the cytoplasm. The enzyme catalyses D-glyceraldehyde 3-phosphate + phosphate + NAD(+) = (2R)-3-phospho-glyceroyl phosphate + NADH + H(+). It participates in carbohydrate degradation; glycolysis; pyruvate from D-glyceraldehyde 3-phosphate: step 1/5. In Echinococcus multilocularis (Fox tapeworm), this protein is Glyceraldehyde-3-phosphate dehydrogenase.